Reading from the N-terminus, the 130-residue chain is Small ribosomal subunit protein uS9 (130 aa).

It belongs to the universal ribosomal protein uS9 family.

The protein is Small ribosomal subunit protein uS9 of Exiguobacterium sibiricum (strain DSM 17290 / CCUG 55495 / CIP 109462 / JCM 13490 / 255-15).